We begin with the raw amino-acid sequence, 354 residues long: Replication factor C subunit 5 (354 aa).

ATP is bound by residues V5, S17, 43-51, and R231; that span reads GPNGTGKKT.

The protein belongs to the activator 1 small subunits family. Replication factor C (RFC) is a heteropentamer of subunits RFC1, RFC2, RFC3, RFC4 and RFC5 and forms a complex with POL30/PCNA in the presence of ATP. Component of the RAD24-RFC complex which consists of RAD24, RFC2, RFC3, RFC4 and RFC5 and associates with the checkpoint clamp DDC1:MEC3:RAD17 complex. Component of the ELG1-RFC complex which consists of ELG1, RFC2, RFC3, RFC4 and RFC5. Component of the CTF18-RFC complex, which consists of CTF18, CTF8, DCC1, RFC2, RFC3, RFC4 and RFC5. RFC5 interacts with ECO1.

It is found in the nucleus. Functionally, component of ATP-dependent clamp loader (RFC and RFC-like) complexes for DNA clamps, such as the POL30/PCNA homotrimer and the checkpoint clamp DDC1:MEC3:RAD17 complex. During a clamp loading circle, the RFC:clamp complex binds to DNA and the recognition of the double-stranded/single-stranded junction stimulates ATP hydrolysis by RFC. The complex presumably provides bipartite ATP sites in which one subunit supplies a catalytic site for hydrolysis of ATP bound to the neighboring subunit. Dissociation of RFC from the clamp leaves the clamp encircling DNA. Component of the replication factor C (RFC or activator 1) complex which loads POL30/PCNA and acts during elongation of primed DNA templates by DNA polymerase delta and epsilon. RFC has an essential but redundant activity in sister chromatid cohesion establishment. Component of the RFC-like complex CTF18-RFC which is required for efficient establishment of chromosome cohesion during S-phase and may load or unload POL30/PCNA. Component of the RFC-like RAD24-RFC complex which loads the checkpoint clamp DDC1:MEC3:RAD17 complex and is involved in DNA repair pathways. Component of the RFC-like ELG1-RFC complex which appears to have a role in DNA replication, replication fork re-start, recombination and repair. This is Replication factor C subunit 5 (RFC5) from Saccharomyces cerevisiae (strain ATCC 204508 / S288c) (Baker's yeast).